Here is a 395-residue protein sequence, read N- to C-terminus: Capsid protein (395 aa).

The segment covering methionine 1–isoleucine 41 has biased composition (basic residues). The disordered stretch occupies residues methionine 1–methionine 51. The short motif at alanine 2–serine 9 is the Nuclear localization signal element.

The protein resides in the host nucleus. The protein localises to the virion. In terms of biological role, self-assembles to form the virion icosahedral capsid. The chain is Capsid protein from Chaetoceros setoense (Chaetoceros setoense DNA virus).